We begin with the raw amino-acid sequence, 93 residues long: Transcription factor PRE3 (93 aa).

The 56-residue stretch at 6–61 folds into the bHLH domain; that stretch reads SRSRQSSGTSRISEDQINDLIIKLQQLLPELRDSRRSDKVSAARVLQDTCNYIRNL.

As to quaternary structure, homodimer. Interacts with BHLH 147, BHLH148, BHLH149, BHLH150 and IBH1. Interacts with SIEL. As to expression, expressed in root and shoot meristems, and young siliques. Low levels detected in all aerial tissues.

The protein resides in the nucleus. It localises to the cytoplasm. Atypical and probable non DNA-binding bHLH transcription factor required for MONOPTEROS-dependent root initiation in embryo. Promotes the correct definition of the hypophysis cell division plane. Transcriptionally controlled by MONOPTEROS. Moves from its site of synthesis in pro-embryos cells into the hypophysis. Regulates brassinosteroid (BR) signaling by sequestering negative BR signaling components. May function as positive regulator of gibberellin signaling. May play a role in the regulation of light signaling and possibly auxin signaling. The protein is Transcription factor PRE3 (PRE3) of Arabidopsis thaliana (Mouse-ear cress).